We begin with the raw amino-acid sequence, 25 residues long: Large ribosomal subunit protein uL29 (25 aa).

The protein belongs to the universal ribosomal protein uL29 family.

The chain is Large ribosomal subunit protein uL29 (rpmC) from Brevundimonas vesicularis (Pseudomonas vesicularis).